The following is a 353-amino-acid chain: Ribosomal RNA small subunit methyltransferase H (353 aa).

S-adenosyl-L-methionine is bound by residues 39 to 41, D58, F90, D108, and Q115; that span reads AGH. The segment at 334-353 is disordered; it reads SEDGVRGAHGHRRRTQARRG. The segment covering 341–353 has biased composition (basic residues); that stretch reads AHGHRRRTQARRG.

This sequence belongs to the methyltransferase superfamily. RsmH family.

The protein resides in the cytoplasm. It carries out the reaction cytidine(1402) in 16S rRNA + S-adenosyl-L-methionine = N(4)-methylcytidine(1402) in 16S rRNA + S-adenosyl-L-homocysteine + H(+). Functionally, specifically methylates the N4 position of cytidine in position 1402 (C1402) of 16S rRNA. The polypeptide is Ribosomal RNA small subunit methyltransferase H (Bifidobacterium animalis subsp. lactis (strain AD011)).